Consider the following 226-residue polypeptide: Probable transcriptional regulatory protein y4xI (226 aa).

One can recognise a Response regulatory domain in the interval 1-114 (MRTLLVDTDL…ELIARMRALL (114 aa)). A DNA-binding region (ompR/PhoB-type) is located at residues 122-220 (CPIIEFGNLH…VRGIGYTLEL (99 aa)).

It is found in the cytoplasm. This is Probable transcriptional regulatory protein y4xI from Sinorhizobium fredii (strain NBRC 101917 / NGR234).